The following is a 388-amino-acid chain: 8-amino-7-oxononanoate synthase (388 aa).

Arg-23 is a substrate binding site. Pyridoxal 5'-phosphate is bound at residue 110 to 111 (GF). Residue His-135 participates in substrate binding. The pyridoxal 5'-phosphate site is built by Ser-181, His-209, and Thr-235. An N6-(pyridoxal phosphate)lysine modification is found at Lys-238. Position 352 (Thr-352) interacts with substrate.

This sequence belongs to the class-II pyridoxal-phosphate-dependent aminotransferase family. BioF subfamily. Homodimer. Pyridoxal 5'-phosphate is required as a cofactor.

The catalysed reaction is 6-carboxyhexanoyl-[ACP] + L-alanine + H(+) = (8S)-8-amino-7-oxononanoate + holo-[ACP] + CO2. It functions in the pathway cofactor biosynthesis; biotin biosynthesis. Its function is as follows. Catalyzes the decarboxylative condensation of pimeloyl-[acyl-carrier protein] and L-alanine to produce 8-amino-7-oxononanoate (AON), [acyl-carrier protein], and carbon dioxide. This Sodalis glossinidius (strain morsitans) protein is 8-amino-7-oxononanoate synthase.